We begin with the raw amino-acid sequence, 301 residues long: Peptidyl-prolyl isomerase CWC27 (301 aa).

Residues 9–159 (TTAKCILYTT…YPAVLKDVEI (151 aa)) form the PPIase cyclophilin-type domain. The interval 251-280 (TELHDNVDEATTKETESQENIKEEPMDKRE) is disordered.

The protein belongs to the cyclophilin-type PPIase family. CWC27 subfamily. In terms of assembly, belongs to the CWC complex (or CEF1-associated complex), a spliceosome subcomplex composed of the U2, U5 and U6 snRNAs and at least BUD13, BUD31, BRR2, CDC40, CEF1, CLF1, CUS1, CWC2, CWC15, CWC21, CWC22, CWC23, CWC24, CWC25, CWC27, ECM2, HSH155, IST3, ISY1, LEA1, MSL1, NTC20, PRP8, PRP9, PRP11, PRP19, PRP21, PRP22, PRP45, PRP46, SLU7, SMB1, SMD1, SMD2, SMD3, SMX2, SMX3, SNT309, SNU114, SPP2, SYF1, SYF2, RSE1 and YJU2.

It localises to the cytoplasm. The protein localises to the nucleus. The catalysed reaction is [protein]-peptidylproline (omega=180) = [protein]-peptidylproline (omega=0). Functionally, PPIases accelerate the folding of proteins. Catalyzes the cis-trans isomerization of proline imidic peptide bonds in oligopeptides. Involved in pre-mRNA splicing. This chain is Peptidyl-prolyl isomerase CWC27 (CWC27), found in Saccharomyces cerevisiae (strain ATCC 204508 / S288c) (Baker's yeast).